We begin with the raw amino-acid sequence, 369 residues long: UDP-3-O-acylglucosamine N-acyltransferase (369 aa).

Catalysis depends on histidine 263, which acts as the Proton acceptor.

It belongs to the transferase hexapeptide repeat family. LpxD subfamily. As to quaternary structure, homotrimer.

The enzyme catalyses a UDP-3-O-[(3R)-3-hydroxyacyl]-alpha-D-glucosamine + a (3R)-hydroxyacyl-[ACP] = a UDP-2-N,3-O-bis[(3R)-3-hydroxyacyl]-alpha-D-glucosamine + holo-[ACP] + H(+). Its pathway is bacterial outer membrane biogenesis; LPS lipid A biosynthesis. In terms of biological role, catalyzes the N-acylation of UDP-3-O-acylglucosamine using 3-hydroxyacyl-ACP as the acyl donor. Is involved in the biosynthesis of lipid A, a phosphorylated glycolipid that anchors the lipopolysaccharide to the outer membrane of the cell. This Burkholderia vietnamiensis (strain G4 / LMG 22486) (Burkholderia cepacia (strain R1808)) protein is UDP-3-O-acylglucosamine N-acyltransferase.